The primary structure comprises 117 residues: Large ribosomal subunit protein bL19 (117 aa).

Belongs to the bacterial ribosomal protein bL19 family.

Functionally, this protein is located at the 30S-50S ribosomal subunit interface and may play a role in the structure and function of the aminoacyl-tRNA binding site. The chain is Large ribosomal subunit protein bL19 from Thermotoga neapolitana (strain ATCC 49049 / DSM 4359 / NBRC 107923 / NS-E).